The following is a 391-amino-acid chain: MIKSALLVLEDGTQFHGRAIGAEGTAVGEVVFNTSMTGYQEILTDPSYSRQIVTLTYPHIGNVGTNASDEESSAVHAQGLVIRDLPLIASNYRNEEGLSEYLKRHNIVAIADIDTRKLTRLLREKGAQNGCIIVGELSDAALALEKAKAFPGLKGMDLAKEVTTKEMYQWLQGSWTLEGDLPAAKQPEDLPFHVVAYDYGVKRNILRMLVDRGCRLTVVPAQTPAEDVLKLNPDGIFLSNGPGDPEPCDYAITAIKRFLETDIPVFGICLGHQLLALASGAKTVKMKFGHHGGNHPVKDLDASCVMITAQNHGFAVDETSLPSNLRTTHVSLFDGSLQGLHRTDKAAFSFQGHPEASPGPHDAAPLFDHFIELIEAYRASSVSLNCSNSHK.

Residues 1 to 189 (MIKSALLVLE…DLPAAKQPED (189 aa)) are CPSase. The L-glutamine site is built by Ser47, Gly241, and Gly243. In terms of domain architecture, Glutamine amidotransferase type-1 spans 193-380 (HVVAYDYGVK…IELIEAYRAS (188 aa)). Catalysis depends on Cys269, which acts as the Nucleophile. Positions 270, 273, 311, 313, and 314 each coordinate L-glutamine. Residues His353 and Glu355 contribute to the active site.

It belongs to the CarA family. Composed of two chains; the small (or glutamine) chain promotes the hydrolysis of glutamine to ammonia, which is used by the large (or ammonia) chain to synthesize carbamoyl phosphate. Tetramer of heterodimers (alpha,beta)4.

The enzyme catalyses hydrogencarbonate + L-glutamine + 2 ATP + H2O = carbamoyl phosphate + L-glutamate + 2 ADP + phosphate + 2 H(+). It carries out the reaction L-glutamine + H2O = L-glutamate + NH4(+). It participates in amino-acid biosynthesis; L-arginine biosynthesis; carbamoyl phosphate from bicarbonate: step 1/1. It functions in the pathway pyrimidine metabolism; UMP biosynthesis via de novo pathway; (S)-dihydroorotate from bicarbonate: step 1/3. Its function is as follows. Small subunit of the glutamine-dependent carbamoyl phosphate synthetase (CPSase). CPSase catalyzes the formation of carbamoyl phosphate from the ammonia moiety of glutamine, carbonate, and phosphate donated by ATP, constituting the first step of 2 biosynthetic pathways, one leading to arginine and/or urea and the other to pyrimidine nucleotides. The small subunit (glutamine amidotransferase) binds and cleaves glutamine to supply the large subunit with the substrate ammonia. The protein is Carbamoyl phosphate synthase small chain of Yersinia pestis.